We begin with the raw amino-acid sequence, 150 residues long: D-aminoacyl-tRNA deacylase (150 aa).

The short motif at 138–139 is the Gly-cisPro motif, important for rejection of L-amino acids element; it reads GP.

The protein belongs to the DTD family. As to quaternary structure, homodimer.

The protein localises to the cytoplasm. The enzyme catalyses glycyl-tRNA(Ala) + H2O = tRNA(Ala) + glycine + H(+). The catalysed reaction is a D-aminoacyl-tRNA + H2O = a tRNA + a D-alpha-amino acid + H(+). Functionally, an aminoacyl-tRNA editing enzyme that deacylates mischarged D-aminoacyl-tRNAs. Also deacylates mischarged glycyl-tRNA(Ala), protecting cells against glycine mischarging by AlaRS. Acts via tRNA-based rather than protein-based catalysis; rejects L-amino acids rather than detecting D-amino acids in the active site. By recycling D-aminoacyl-tRNA to D-amino acids and free tRNA molecules, this enzyme counteracts the toxicity associated with the formation of D-aminoacyl-tRNA entities in vivo and helps enforce protein L-homochirality. The protein is D-aminoacyl-tRNA deacylase of Chlorobium limicola (strain DSM 245 / NBRC 103803 / 6330).